Reading from the N-terminus, the 1245-residue chain is ATP-dependent helicase/nuclease subunit A (1245 aa).

Residues 4 to 477 (TKWTDEQLSA…IQLYKNFRSR (474 aa)) enclose the UvrD-like helicase ATP-binding domain. Residue 25-32 (AAAGSGKT) coordinates ATP. The UvrD-like helicase C-terminal domain maps to 517-815 (KFKDTIVGGP…RIMSIHKSKG (299 aa)).

This sequence belongs to the helicase family. AddA subfamily. In terms of assembly, heterodimer of AddA and AddB/RexB. Mg(2+) is required as a cofactor.

The catalysed reaction is Couples ATP hydrolysis with the unwinding of duplex DNA by translocating in the 3'-5' direction.. It carries out the reaction ATP + H2O = ADP + phosphate + H(+). The heterodimer acts as both an ATP-dependent DNA helicase and an ATP-dependent, dual-direction single-stranded exonuclease. Recognizes the chi site generating a DNA molecule suitable for the initiation of homologous recombination. The AddA nuclease domain is required for chi fragment generation; this subunit has the helicase and 3' -&gt; 5' nuclease activities. This is ATP-dependent helicase/nuclease subunit A from Clostridium beijerinckii (strain ATCC 51743 / NCIMB 8052) (Clostridium acetobutylicum).